We begin with the raw amino-acid sequence, 357 residues long: Histidinol-phosphate aminotransferase 2 (357 aa).

An N6-(pyridoxal phosphate)lysine modification is found at Lys216.

Belongs to the class-II pyridoxal-phosphate-dependent aminotransferase family. Histidinol-phosphate aminotransferase subfamily. As to quaternary structure, homodimer. It depends on pyridoxal 5'-phosphate as a cofactor.

The catalysed reaction is L-histidinol phosphate + 2-oxoglutarate = 3-(imidazol-4-yl)-2-oxopropyl phosphate + L-glutamate. It functions in the pathway amino-acid biosynthesis; L-histidine biosynthesis; L-histidine from 5-phospho-alpha-D-ribose 1-diphosphate: step 7/9. The polypeptide is Histidinol-phosphate aminotransferase 2 (Idiomarina loihiensis (strain ATCC BAA-735 / DSM 15497 / L2-TR)).